The following is a 495-amino-acid chain: Tripartite motif-containing protein 5 (495 aa).

Position 2 is an N-acetylalanine (alanine 2). The RING-type zinc-finger motif lies at 15 to 60 (CPICLELLTEPLSLHCGHSFCQACITANHKKSMLYKEGERSCPVCR). At serine 87 the chain carries Phosphoserine. Residues 92–133 (QKVDHCARHGEKLLLFCQEDRKVICWLCERSQEHRGHHTFLM) form a B box-type zinc finger. Cysteine 97, histidine 100, cysteine 119, and histidine 125 together coordinate Zn(2+). Residues 137–225 (AQEYHVKLQT…LTKSETEMVQ (89 aa)) are a coiled coil. Positions 187-200 (FEQLREILDWEESN) are required for interaction with GABARAP and for autophagy. Residues 283–495 (LKGILDMFRE…VPMTLCSPSS (213 aa)) enclose the B30.2/SPRY domain.

The protein belongs to the TRIM/RBCC family. As to quaternary structure, can form homodimers and homotrimers. In addition to lower-order dimerization, also exhibits a higher-order multimerization and both low- and high-order multimerizations are essential for its restriction activity. Interacts with BTBD1 and BTBD2. Interacts with PSMC4, PSMC5, PSMD7 and HSPA8/HSC70. Interacts (via B30.2/SPRY domain) with HSPA1A/B. Interacts with PSMC2, MAP3K7/TAK1, TAB2 and TAB3. Interacts with SQSTM1. Interacts with TRIM6 and TRIM34. Interacts with ULK1 (phosphorylated form), GABARAP, GABARAPL1, GABARAPL2, MAP1LC3A, MAP1LC3C and BECN1. Post-translationally, degraded in a proteasome-independent fashion in the absence of viral infection but in a proteasome-dependent fashion following exposure to restriction sensitive virus. Autoubiquitinated in a RING finger- and UBE2D2-dependent manner. Monoubiquitinated by TRIM21. Deubiquitinated by Yersinia YopJ. Ubiquitination may not lead to proteasomal degradation.

The protein resides in the cytoplasm. Its subcellular location is the nucleus. It catalyses the reaction S-ubiquitinyl-[E2 ubiquitin-conjugating enzyme]-L-cysteine + [acceptor protein]-L-lysine = [E2 ubiquitin-conjugating enzyme]-L-cysteine + N(6)-ubiquitinyl-[acceptor protein]-L-lysine.. The protein operates within protein modification; protein ubiquitination. Capsid-specific restriction factor that prevents infection from non-host-adapted retroviruses. Blocks viral replication early in the life cycle, after viral entry but before reverse transcription. In addition to acting as a capsid-specific restriction factor, also acts as a pattern recognition receptor that activates innate immune signaling in response to the retroviral capsid lattice. Binding to the viral capsid triggers its E3 ubiquitin ligase activity, and in concert with the heterodimeric ubiquitin conjugating enzyme complex UBE2V1-UBE2N (also known as UBC13-UEV1A complex) generates 'Lys-63'-linked polyubiquitin chains, which in turn are catalysts in the autophosphorylation of the MAP3K7/TAK1 complex (includes TAK1, TAB2, and TAB3). Activation of the MAP3K7/TAK1 complex by autophosphorylation results in the induction and expression of NF-kappa-B and MAPK-responsive inflammatory genes, thereby leading to an innate immune response in the infected cell. Plays a role in regulating autophagy through activation of autophagy regulator BECN1 by causing its dissociation from its inhibitors BCL2 and TAB2. The protein is Tripartite motif-containing protein 5 (TRIM5) of Pygathrix nemaeus (Red-shanked douc langur).